Reading from the N-terminus, the 300-residue chain is Acetyl-coenzyme A carboxylase carboxyl transferase subunit beta 1 (300 aa).

The region spanning 26 to 294 (MWVKCPSCGD…HTSAAQHVPA (269 aa)) is the CoA carboxyltransferase N-terminal domain. Zn(2+) is bound by residues Cys-30, Cys-33, Cys-49, and Cys-51. The C4-type zinc-finger motif lies at 30 to 51 (CPSCGDLIYTRQFSDNLKVCKC).

It belongs to the AccD/PCCB family. In terms of assembly, acetyl-CoA carboxylase is a heterohexamer composed of biotin carboxyl carrier protein (AccB), biotin carboxylase (AccC) and two subunits each of ACCase subunit alpha (AccA) and ACCase subunit beta (AccD). It depends on Zn(2+) as a cofactor.

The protein localises to the cytoplasm. It catalyses the reaction N(6)-carboxybiotinyl-L-lysyl-[protein] + acetyl-CoA = N(6)-biotinyl-L-lysyl-[protein] + malonyl-CoA. It participates in lipid metabolism; malonyl-CoA biosynthesis; malonyl-CoA from acetyl-CoA: step 1/1. Component of the acetyl coenzyme A carboxylase (ACC) complex. Biotin carboxylase (BC) catalyzes the carboxylation of biotin on its carrier protein (BCCP) and then the CO(2) group is transferred by the transcarboxylase to acetyl-CoA to form malonyl-CoA. The sequence is that of Acetyl-coenzyme A carboxylase carboxyl transferase subunit beta 1 from Roseiflexus sp. (strain RS-1).